The primary structure comprises 326 residues: MKSISCGKEYTEDVRNINIRPEQLDDFVGQKDLIQNLKVFINAAQTRTEALDHVLLYGPPGLGKTTLAQIVSKELRVSFRATSGPLLSKAGDLAAVLTTLNAKDVLFIDEIHRLNRSIEEVLYTAMEDFCLDILVGEGPSTRTLRIDLPPFTLIGATTRLGLLSAPLRDRFGIPLHLEFYSFEELVNIIKRGARVLSAEIEEDAAREIACRARGTPRIALRLLRRIRDFVEVKDDKKITYEVADSVLLKLGVDKMGLNKLDMNYLRFLFNTSGPVGIDTISIALSEDVGNIEETVEPYLIKISFVKRTPRGRVLTDQAKEYLSFQH.

Positions 1-180 (MKSISCGKEY…FGIPLHLEFY (180 aa)) are large ATPase domain (RuvB-L). Residues I19, R20, G61, K64, T65, T66, 127-129 (EDF), R170, Y180, and R217 contribute to the ATP site. Position 65 (T65) interacts with Mg(2+). Residues 181–251 (SFEELVNIIK…VADSVLLKLG (71 aa)) are small ATPAse domain (RuvB-S). The head domain (RuvB-H) stretch occupies residues 254 to 326 (KMGLNKLDMN…QAKEYLSFQH (73 aa)). Residues R307 and R312 each coordinate DNA.

It belongs to the RuvB family. In terms of assembly, homohexamer. Forms an RuvA(8)-RuvB(12)-Holliday junction (HJ) complex. HJ DNA is sandwiched between 2 RuvA tetramers; dsDNA enters through RuvA and exits via RuvB. An RuvB hexamer assembles on each DNA strand where it exits the tetramer. Each RuvB hexamer is contacted by two RuvA subunits (via domain III) on 2 adjacent RuvB subunits; this complex drives branch migration. In the full resolvosome a probable DNA-RuvA(4)-RuvB(12)-RuvC(2) complex forms which resolves the HJ.

The protein localises to the cytoplasm. It carries out the reaction ATP + H2O = ADP + phosphate + H(+). Functionally, the RuvA-RuvB-RuvC complex processes Holliday junction (HJ) DNA during genetic recombination and DNA repair, while the RuvA-RuvB complex plays an important role in the rescue of blocked DNA replication forks via replication fork reversal (RFR). RuvA specifically binds to HJ cruciform DNA, conferring on it an open structure. The RuvB hexamer acts as an ATP-dependent pump, pulling dsDNA into and through the RuvAB complex. RuvB forms 2 homohexamers on either side of HJ DNA bound by 1 or 2 RuvA tetramers; 4 subunits per hexamer contact DNA at a time. Coordinated motions by a converter formed by DNA-disengaged RuvB subunits stimulates ATP hydrolysis and nucleotide exchange. Immobilization of the converter enables RuvB to convert the ATP-contained energy into a lever motion, pulling 2 nucleotides of DNA out of the RuvA tetramer per ATP hydrolyzed, thus driving DNA branch migration. The RuvB motors rotate together with the DNA substrate, which together with the progressing nucleotide cycle form the mechanistic basis for DNA recombination by continuous HJ branch migration. Branch migration allows RuvC to scan DNA until it finds its consensus sequence, where it cleaves and resolves cruciform DNA. This Wolbachia pipientis wMel protein is Holliday junction branch migration complex subunit RuvB.